The chain runs to 126 residues: Large ribosomal subunit protein bL17 (126 aa).

Belongs to the bacterial ribosomal protein bL17 family. In terms of assembly, part of the 50S ribosomal subunit. Contacts protein L32.

The protein is Large ribosomal subunit protein bL17 of Vibrio parahaemolyticus serotype O3:K6 (strain RIMD 2210633).